A 320-amino-acid chain; its full sequence is Malate dehydrogenase (320 aa).

NAD(+) is bound by residues 10 to 15 (GAGQIG) and D34. Substrate-binding residues include R83 and R89. Residues N96 and 119-121 (ITN) each bind NAD(+). Residues N121 and R152 each contribute to the substrate site. H176 functions as the Proton acceptor in the catalytic mechanism.

This sequence belongs to the LDH/MDH superfamily. MDH type 3 family.

The enzyme catalyses (S)-malate + NAD(+) = oxaloacetate + NADH + H(+). In terms of biological role, catalyzes the reversible oxidation of malate to oxaloacetate. This is Malate dehydrogenase from Methylorubrum populi (strain ATCC BAA-705 / NCIMB 13946 / BJ001) (Methylobacterium populi).